Consider the following 447-residue polypeptide: Cobyrinate a,c-diamide synthase (447 aa).

Residues 247–435 (RIGVAIDEAF…IHIHAASCPQ (189 aa)) enclose the GATase cobBQ-type domain. Cys329 (nucleophile) is an active-site residue.

It belongs to the CobB/CbiA family. It depends on Mg(2+) as a cofactor.

It catalyses the reaction cob(II)yrinate + 2 L-glutamine + 2 ATP + 2 H2O = cob(II)yrinate a,c diamide + 2 L-glutamate + 2 ADP + 2 phosphate + 2 H(+). The catalysed reaction is Ni-sirohydrochlorin + 2 L-glutamine + 2 ATP + 2 H2O = Ni-sirohydrochlorin a,c-diamide + 2 L-glutamate + 2 ADP + 2 phosphate + 2 H(+). Its pathway is cofactor biosynthesis; adenosylcobalamin biosynthesis; cob(II)yrinate a,c-diamide from sirohydrochlorin (anaerobic route): step 10/10. Functionally, catalyzes the ATP-dependent amidation of the two carboxylate groups at positions a and c of cobyrinate, using either L-glutamine or ammonia as the nitrogen source. Involved in the biosynthesis of the unique nickel-containing tetrapyrrole coenzyme F430, the prosthetic group of methyl-coenzyme M reductase (MCR), which plays a key role in methanogenesis and anaerobic methane oxidation. Catalyzes the ATP-dependent amidation of the two carboxylate groups at positions a and c of Ni-sirohydrochlorin, using L-glutamine or ammonia as the nitrogen source. The sequence is that of Cobyrinate a,c-diamide synthase from Methanothermobacter thermautotrophicus (strain ATCC 29096 / DSM 1053 / JCM 10044 / NBRC 100330 / Delta H) (Methanobacterium thermoautotrophicum).